Here is a 318-residue protein sequence, read N- to C-terminus: Methionyl-tRNA formyltransferase (318 aa).

112–115 contacts (6S)-5,6,7,8-tetrahydrofolate; sequence SILP.

Belongs to the Fmt family.

It catalyses the reaction L-methionyl-tRNA(fMet) + (6R)-10-formyltetrahydrofolate = N-formyl-L-methionyl-tRNA(fMet) + (6S)-5,6,7,8-tetrahydrofolate + H(+). In terms of biological role, attaches a formyl group to the free amino group of methionyl-tRNA(fMet). The formyl group appears to play a dual role in the initiator identity of N-formylmethionyl-tRNA by promoting its recognition by IF2 and preventing the misappropriation of this tRNA by the elongation apparatus. This Shewanella baltica (strain OS185) protein is Methionyl-tRNA formyltransferase.